A 460-amino-acid polypeptide reads, in one-letter code: Probable asparagine--tRNA ligase, mitochondrial (460 aa).

Belongs to the class-II aminoacyl-tRNA synthetase family.

Its subcellular location is the mitochondrion matrix. The catalysed reaction is tRNA(Asn) + L-asparagine + ATP = L-asparaginyl-tRNA(Asn) + AMP + diphosphate + H(+). The sequence is that of Probable asparagine--tRNA ligase, mitochondrial (asnS2) from Dictyostelium discoideum (Social amoeba).